Reading from the N-terminus, the 186-residue chain is Ribosome-recycling factor (186 aa).

It belongs to the RRF family.

It localises to the cytoplasm. Its function is as follows. Responsible for the release of ribosomes from messenger RNA at the termination of protein biosynthesis. May increase the efficiency of translation by recycling ribosomes from one round of translation to another. This chain is Ribosome-recycling factor, found in Methylibium petroleiphilum (strain ATCC BAA-1232 / LMG 22953 / PM1).